A 171-amino-acid polypeptide reads, in one-letter code: ATP synthase subunit b (171 aa).

The helical transmembrane segment at 2 to 22 (FVVKMVLGFLILLSPLCATGL) threads the bilayer.

This sequence belongs to the ATPase B chain family. As to quaternary structure, F-type ATPases have 2 components, F(1) - the catalytic core - and F(0) - the membrane proton channel. F(1) has five subunits: alpha(3), beta(3), gamma(1), delta(1), epsilon(1). F(0) has three main subunits: a(1), b(2) and c(10-14). The alpha and beta chains form an alternating ring which encloses part of the gamma chain. F(1) is attached to F(0) by a central stalk formed by the gamma and epsilon chains, while a peripheral stalk is formed by the delta and b chains.

Its subcellular location is the cell inner membrane. In terms of biological role, f(1)F(0) ATP synthase produces ATP from ADP in the presence of a proton or sodium gradient. F-type ATPases consist of two structural domains, F(1) containing the extramembraneous catalytic core and F(0) containing the membrane proton channel, linked together by a central stalk and a peripheral stalk. During catalysis, ATP synthesis in the catalytic domain of F(1) is coupled via a rotary mechanism of the central stalk subunits to proton translocation. Component of the F(0) channel, it forms part of the peripheral stalk, linking F(1) to F(0). The protein is ATP synthase subunit b of Helicobacter pylori (strain J99 / ATCC 700824) (Campylobacter pylori J99).